The primary structure comprises 100 residues: Replication restart protein PriB (100 aa).

The SSB domain occupies 1–99 (MGFNNLVSLA…LRIQNIQEYK (99 aa)).

It belongs to the PriB family. In terms of assembly, homodimer. Interacts with PriA and DnaT. Component of the replication restart primosome. Primosome assembly occurs via a 'hand-off' mechanism. PriA binds to replication forks, subsequently PriB then DnaT bind; DnaT then displaces ssDNA to generate the helicase loading substrate.

In terms of biological role, involved in the restart of stalled replication forks, which reloads the replicative helicase on sites other than the origin of replication; the PriA-PriB pathway is the major replication restart pathway. During primosome assembly it facilitates complex formation between PriA and DnaT on DNA; stabilizes PriA on DNA. Stimulates the DNA unwinding activity of PriA helicase. This is Replication restart protein PriB from Neisseria meningitidis serogroup A / serotype 4A (strain DSM 15465 / Z2491).